The following is a 1217-amino-acid chain: Myosin-1 (1217 aa).

A disordered region spans residues 1–26; the sequence is MAILKRTNRAKAATAAAPNSTGKSNG. The span at 10–19 shows a compositional bias: low complexity; that stretch reads AKAATAAAPN. ATP is bound by residues 17–24 and 133–140; these read APNSTGKS and GESGAGKT. The region spanning 40 to 720 is the Myosin motor domain; sequence VGVDDLTLLS…TLFALEDMRD (681 aa). Ser361 is subject to Phosphoserine. Tyr363 is subject to Phosphotyrosine. The segment at 409–491 is actin-binding; it reads SIGILDIYGF…PGLFAAMNDA (83 aa). 2 IQ domains span residues 724 to 744 and 745 to 770; these read DTMA…RSEA and AACI…EGTK. The residue at position 742 (Ser742) is a Phosphoserine. The 187-residue stretch at 778 to 964 folds into the TH1 domain; the sequence is RRRYSILGSR…TIHVGTGLPP (187 aa). Ser782 bears the Phosphoserine mark. A disordered region spans residues 961–1105; it reads GLPPTSKSKP…PPPPPPPAEV (145 aa). A compositionally biased stretch (low complexity) spans 998-1013; it reads KPVSMPAAKSKPAPMA. Residues 1015-1025 are compositionally biased toward polar residues; the sequence is PVSTAQQTQNR. Residues 1045 to 1075 show a composition bias toward low complexity; sequence TSTTTTIKQATTVSASKPAPSTVTSAASSPS. Positions 1076–1088 are enriched in polar residues; sequence NISKPSAPVANNV. Positions 1093–1103 are enriched in pro residues; that stretch reads AVPPPPPPPPA. An SH3 domain is found at 1106-1165; sequence EKKDLYLALYDFAGRSPNEMTIKKDEIIEIVQKEPSGWWLALKNGAEGWVPATYVTEYKG. Position 1211 is a phosphoserine (Ser1211).

This sequence belongs to the TRAFAC class myosin-kinesin ATPase superfamily. Myosin family. Interacts with cam2. Interacts (via SH3 domain) with vrp1. In terms of processing, phosphorylation of the TEDS site (Ser-361) is required for the polarization of the actin cytoskeleton. Phosphorylation probably activates the myosin-I ATPase activity.

Its subcellular location is the cytoplasm. The protein localises to the cytoskeleton. The protein resides in the actin patch. Functionally, type-I myosin implicated in the organization of the actin cytoskeleton. Required for proper actin cytoskeleton polarization. At the cell cortex, assembles in patch-like structures together with proteins from the actin-polymerizing machinery and promotes actin assembly. Functions as actin nucleation-promoting factor (NPF) for the Arp2/3 complex. Contributes to proper septation by transporting vesicles containing septal material to the division site and is involved in the formation of sterol-rich membrane domains at the cell division site. Required also for mating. The polypeptide is Myosin-1 (myo1) (Schizosaccharomyces pombe (strain 972 / ATCC 24843) (Fission yeast)).